We begin with the raw amino-acid sequence, 486 residues long: tRNA sulfurtransferase (486 aa).

A THUMP domain is found at 63 to 167 (DAFAERLGCI…HEKLYMVVRR (105 aa)). Residues 185–186 (LI), Lys267, Gly289, and Gln298 contribute to the ATP site. Cys346 and Cys460 form a disulfide bridge. The region spanning 408–486 (VDTQEVVIDI…GYTNVKVYRP (79 aa)) is the Rhodanese domain. Catalysis depends on Cys460, which acts as the Cysteine persulfide intermediate.

This sequence belongs to the ThiI family.

It localises to the cytoplasm. The catalysed reaction is [ThiI sulfur-carrier protein]-S-sulfanyl-L-cysteine + a uridine in tRNA + 2 reduced [2Fe-2S]-[ferredoxin] + ATP + H(+) = [ThiI sulfur-carrier protein]-L-cysteine + a 4-thiouridine in tRNA + 2 oxidized [2Fe-2S]-[ferredoxin] + AMP + diphosphate. The enzyme catalyses [ThiS sulfur-carrier protein]-C-terminal Gly-Gly-AMP + S-sulfanyl-L-cysteinyl-[cysteine desulfurase] + AH2 = [ThiS sulfur-carrier protein]-C-terminal-Gly-aminoethanethioate + L-cysteinyl-[cysteine desulfurase] + A + AMP + 2 H(+). It functions in the pathway cofactor biosynthesis; thiamine diphosphate biosynthesis. Functionally, catalyzes the ATP-dependent transfer of a sulfur to tRNA to produce 4-thiouridine in position 8 of tRNAs, which functions as a near-UV photosensor. Also catalyzes the transfer of sulfur to the sulfur carrier protein ThiS, forming ThiS-thiocarboxylate. This is a step in the synthesis of thiazole, in the thiamine biosynthesis pathway. The sulfur is donated as persulfide by IscS. This Shewanella denitrificans (strain OS217 / ATCC BAA-1090 / DSM 15013) protein is tRNA sulfurtransferase.